A 217-amino-acid polypeptide reads, in one-letter code: MILILLGPPGIGKGTQASVLSYILKINHISTGDIFRKNFKENTELGTLSKKFIAQGLLVPDDITNQMIADYLSKDIATKDFLLDGFPRNVLQARFLDDFFKKSHLFLTKVIYFNAGTKDLMKRIAGRRICPECGKVYHIEKIPPKNPGICDKDQKTLIQREDDKPETFLKRLKVFNKETLPLVQYYCEQNQLFEVDGMQTIDQVTKMILEVLETDRK.

10–15 (GIGKGT) is a binding site for ATP. The NMP stretch occupies residues 30-59 (STGDIFRKNFKENTELGTLSKKFIAQGLLV). Residues Thr31, Arg36, 57–59 (LLV), 85–88 (GFPR), and Gln92 each bind AMP. An LID region spans residues 126–163 (GRRICPECGKVYHIEKIPPKNPGICDKDQKTLIQREDD). Arg127 provides a ligand contact to ATP. Residues Cys130 and Cys133 each coordinate Zn(2+). 136–137 (VY) provides a ligand contact to ATP. Positions 150 and 153 each coordinate Zn(2+). AMP contacts are provided by Arg160 and Arg171. Gln199 is a binding site for ATP.

This sequence belongs to the adenylate kinase family. Monomer.

It is found in the cytoplasm. It carries out the reaction AMP + ATP = 2 ADP. It participates in purine metabolism; AMP biosynthesis via salvage pathway; AMP from ADP: step 1/1. In terms of biological role, catalyzes the reversible transfer of the terminal phosphate group between ATP and AMP. Plays an important role in cellular energy homeostasis and in adenine nucleotide metabolism. In Aster yellows witches'-broom phytoplasma (strain AYWB), this protein is Adenylate kinase.